A 160-amino-acid polypeptide reads, in one-letter code: Protein cornichon homolog 3 (160 aa).

At 1-10 the chain is on the cytoplasmic side; the sequence is MAFTFAAFCY. The chain crosses the membrane as a helical span at residues 11–31; that stretch reads MLSLVLCAALIFFAIWHIIAF. Over 32 to 72 the chain is Lumenal; that stretch reads DELRTDFKSPIDQCNPVHARERLRNIERICFLLRKLVLPEY. A helical membrane pass occupies residues 73 to 93; that stretch reads SIHSLFCVMFLCAQEWLTLGL. At 94–138 the chain is on the cytoplasmic side; sequence NVPLLFYHFWRYFHCPADSSELAYDPPVVMNADTLSYCQKEAWCK. Residues 139-159 form a helical membrane-spanning segment; the sequence is LAFYLLSFFYYLYCMIYTLVS. Residue Ser-160 is a topological domain, lumenal.

This sequence belongs to the cornichon family. As to quaternary structure, acts as an auxiliary subunit for AMPA-selective glutamate receptors (AMPARs). Found in a complex with GRIA1, GRIA2, GRIA3, GRIA4, CNIH2, CACNG2, CACNG3, CACNG4, CACNG5, CACNG7 and CACNG8. Brain. Expressed in the neocortex, hippocampal formation, and cerebellum (at protein level).

The protein localises to the postsynaptic cell membrane. In terms of biological role, regulates the trafficking and gating properties of AMPA-selective glutamate receptors (AMPARs). Promotes their targeting to the cell membrane and synapses and modulates their gating properties by regulating their rates of activation, deactivation and desensitization. The chain is Protein cornichon homolog 3 (Cnih3) from Rattus norvegicus (Rat).